Consider the following 1503-residue polypeptide: Dynein axonemal assembly factor 1 homolog (1503 aa).

LRR repeat units lie at residues 34-56 (RLNDVLYLHYQGFQCIENLEEYT), 57-78 (ELKCLWLECNAISEIQGLEKLG), 79-100 (KLKCLFLQNNLITKIENLDPCR), 101-122 (ELDTLNLSSNHIRKIQNIGTNI), 125-146 (VLNTLTIASNYLKDSDSLSDLI), and 150-171 (TLSVLDLSNNRIDDILIVKIFE). Positions 185–223 (PVVSRLPQYRKTLILACKELTYLDSRPVFPRDRACAEAW) constitute an LRRCT domain. Disordered regions lie at residues 249–280 (SINCTIRMRNSHRPPDQQDPLLRSSDSEDDTC), 305–328 (EQPISDHGTSTSSSVEDKDGTSSQ), 956–1033 (DSGD…DHDE), and 1295–1315 (STNNHSFSTKKTLPTKTSTSE). Over residues 973 to 985 (TESEDYDTAEDEY) the composition is skewed to acidic residues. Positions 1014–1031 (QKQDKPDTVEEVGKKNDH) are enriched in basic and acidic residues. The segment covering 1303–1314 (TKKTLPTKTSTS) has biased composition (low complexity).

Belongs to the DNAAF1 family.

It is found in the cell projection. It localises to the cilium. Functionally, cilium-specific protein required for cilia structures. This is Dynein axonemal assembly factor 1 homolog (dtr) from Drosophila erecta (Fruit fly).